A 474-amino-acid polypeptide reads, in one-letter code: MLKTFDTPIHIIGGGLAGCEASWQIAQSGIPVILHEMRPQKKSDAHKTDKLAELVCSNSFRCDDSSTNAVGLLHAEMRLAKSLIMKAADANKVPAGSALAVDRDGFSKTVTSALENHSLITIKREEVQEISKDWKHVIVATGPLTSPAFAQELKAITGIKALSFFDAIAPIIHTDSIDMNICWYQSRYDKIGPEGTGKDYLNCPLNKEQYETFVEALKNAEKTEFRDFEKTPYFDGCLPIEIMAERGLETLRHGPMKPMGLTNAYNPTVKPYAVVQLRQDNKLGTLYNMVGFQTKLKYGEQVRIFRMIPGLEKAEFARLGGLHRNTYLNSPIILDQTLRLKQKKQLRFAGQITGCEGYVESAAIGLLAGRFAAAEYHHNCPCLPPQTTAFGALLNHITGGHIIDEEAERPSFQPMNINFGLFPPISPIRYSGKRLPSKEKKLAKKQAITARALNDCIQWLADKESKSSCLSKNT.

13 to 18 is an FAD binding site; it reads GGGLAG.

It belongs to the MnmG family. TrmFO subfamily. It depends on FAD as a cofactor.

The protein resides in the cytoplasm. It catalyses the reaction uridine(54) in tRNA + (6R)-5,10-methylene-5,6,7,8-tetrahydrofolate + NADH + H(+) = 5-methyluridine(54) in tRNA + (6S)-5,6,7,8-tetrahydrofolate + NAD(+). The catalysed reaction is uridine(54) in tRNA + (6R)-5,10-methylene-5,6,7,8-tetrahydrofolate + NADPH + H(+) = 5-methyluridine(54) in tRNA + (6S)-5,6,7,8-tetrahydrofolate + NADP(+). In terms of biological role, catalyzes the folate-dependent formation of 5-methyl-uridine at position 54 (M-5-U54) in all tRNAs. This Bartonella tribocorum (strain CIP 105476 / IBS 506) protein is Methylenetetrahydrofolate--tRNA-(uracil-5-)-methyltransferase TrmFO.